Consider the following 105-residue polypeptide: Platelet factor 4 (105 aa).

The N-terminal stretch at 1–29 (MSVAAVFRGLRPSPELLLLGLLFLPAVVA) is a signal peptide. The O-linked (GalNAc...) threonine glycan is linked to threonine 31. Disulfide bonds link cysteine 44–cysteine 71 and cysteine 46–cysteine 87. At serine 61 the chain carries Phosphoserine. A heparin-binding site is contributed by 96–102 (KKVIKKI).

The protein belongs to the intercrine alpha (chemokine CxC) family. As to quaternary structure, homotetramer. Interacts with TNFAIP6 (via Link domain). Interacts with CCR1. Interacts with CXCR3. Interacts with THBD; this interaction enhances generation of activated protein C.

The protein resides in the secreted. Functionally, chemokine released during platelet aggregation that plays a role in different biological processes including hematopoiesis, cell proliferation, differentiation, and activation. Acts via different functional receptors including CCR1, CXCR3A or CXCR3B. Upon interaction with CXCR3A receptor, induces activated T-lymphocytes migration mediated via downstream Ras/extracellular signal-regulated kinase (ERK) signaling. Neutralizes the anticoagulant effect of heparin by binding more strongly to heparin than to the chondroitin-4-sulfate chains of the carrier molecule. Plays a role in the inhibition of hematopoiesis and in the maintenance of hematopoietic stem cell (HSC) quiescence. Chemotactic for neutrophils and monocytes via CCR1. Inhibits endothelial cell proliferation. In cooperation with toll-like receptor 8/TLR8, induces chromatin remodeling and activates inflammatory gene expression via the TBK1-IRF5 axis. In addition, induces myofibroblast differentiation and collagen synthesis in different precursor cells, including endothelial cells, by stimulating endothelial-to-mesenchymal transition. Interacts with thrombomodulin/THBD to enhance the activation of protein C and thus potentiates its anticoagulant activity. This chain is Platelet factor 4 (Pf4), found in Mus musculus (Mouse).